The chain runs to 148 residues: Deoxyuridine 5'-triphosphate nucleotidohydrolase (148 aa).

Substrate is bound by residues 67–69 (RSG), N80, 84–86 (LID), and M94.

Belongs to the dUTPase family. Mg(2+) serves as cofactor.

The catalysed reaction is dUTP + H2O = dUMP + diphosphate + H(+). The protein operates within pyrimidine metabolism; dUMP biosynthesis; dUMP from dCTP (dUTP route): step 2/2. Functionally, this enzyme is involved in nucleotide metabolism: it produces dUMP, the immediate precursor of thymidine nucleotides and it decreases the intracellular concentration of dUTP so that uracil cannot be incorporated into DNA. This chain is Deoxyuridine 5'-triphosphate nucleotidohydrolase, found in Francisella tularensis subsp. tularensis (strain FSC 198).